We begin with the raw amino-acid sequence, 463 residues long: Argininosuccinate lyase (463 aa).

It belongs to the lyase 1 family. Argininosuccinate lyase subfamily.

Its subcellular location is the cytoplasm. The enzyme catalyses 2-(N(omega)-L-arginino)succinate = fumarate + L-arginine. Its pathway is amino-acid biosynthesis; L-arginine biosynthesis; L-arginine from L-ornithine and carbamoyl phosphate: step 3/3. This Streptococcus pneumoniae serotype 2 (strain D39 / NCTC 7466) protein is Argininosuccinate lyase.